The chain runs to 341 residues: Abnormal cell lineage protein 44 (341 aa).

Residues 1–21 (MRALYFRTTTLSTFFILCSLA) form the signal peptide. 11 cysteine pairs are disulfide-bonded: Cys-84–Cys-95, Cys-134–Cys-142, Cys-144–Cys-158, Cys-206–Cys-220, Cys-208–Cys-215, Cys-265–Cys-292, Cys-275–Cys-287, Cys-291–Cys-331, Cys-307–Cys-322, Cys-309–Cys-319, and Cys-314–Cys-315. Ser-212 carries O-palmitoleoyl serine; by mom-1 lipidation. N-linked (GlcNAc...) asparagine glycosylation occurs at Asn-279.

This sequence belongs to the Wnt family. Post-translationally, palmitoleoylation is required for efficient binding to frizzled receptors. Depalmitoleoylation leads to Wnt signaling pathway inhibition.

It is found in the secreted. The protein resides in the extracellular space. Its subcellular location is the extracellular matrix. Ligand for members of the frizzled family of seven transmembrane receptors. Affects male tail development, vulval precursor cell specification and egg laying. Involved in morphogenesis by influencing polarity of asymmetric cell divisions of the B, U, and F cells in the male, and the T cell in males and hermaphrodites. Controls spindle orientation in B-gamma cell division during male copulatory spicule development. Involved in specification of the P7.p lineage during vulval development. Has a role in providing polarity and default lin-17 localization in axon development and positioning of neuromuscular synapses in DA9 regions by negatively regulating synaptogenesis. This is Abnormal cell lineage protein 44 from Caenorhabditis briggsae.